The following is a 238-amino-acid chain: Ribonuclease PH (238 aa).

Phosphate-binding positions include R86 and 124 to 126 (GTR).

This sequence belongs to the RNase PH family. As to quaternary structure, homohexameric ring arranged as a trimer of dimers.

It catalyses the reaction tRNA(n+1) + phosphate = tRNA(n) + a ribonucleoside 5'-diphosphate. Phosphorolytic 3'-5' exoribonuclease that plays an important role in tRNA 3'-end maturation. Removes nucleotide residues following the 3'-CCA terminus of tRNAs; can also add nucleotides to the ends of RNA molecules by using nucleoside diphosphates as substrates, but this may not be physiologically important. Probably plays a role in initiation of 16S rRNA degradation (leading to ribosome degradation) during starvation. The protein is Ribonuclease PH of Psychrobacter cryohalolentis (strain ATCC BAA-1226 / DSM 17306 / VKM B-2378 / K5).